Here is a 362-residue protein sequence, read N- to C-terminus: 11-beta-hydroxysteroid dehydrogenase B (362 aa).

A helical; Signal-anchor for type II membrane protein membrane pass occupies residues 10-30 (FVVPPASLLMLAFTWPTLFFI). The Proline-knob motif lies at 13–26 (PPASLLMLAFTWPT). Residue 55 to 81 (GASSGIGEQIAYQYAKRGANLVLVARR) coordinates NADP(+). A substrate-binding site is contributed by Ser185. Tyr198 serves as the catalytic Proton acceptor. Residues 198–202 (YSAAK) and Lys202 each bind NADP(+). The segment at 321-362 (TGRPLLETSSPRRSAVMEGSSPRRLPPGPLTFSPAFQQQKSE) is disordered.

Belongs to the short-chain dehydrogenases/reductases (SDR) family. As to expression, expressed in seeds (at protein level). Not expressed in stem, leaf or root (at protein level).

It localises to the lipid droplet. The protein resides in the membrane. The enzyme catalyses an 11beta-hydroxysteroid + NADP(+) = an 11-oxosteroid + NADPH + H(+). The catalysed reaction is corticosterone + NADP(+) = 11-dehydrocorticosterone + NADPH + H(+). It carries out the reaction 17beta-estradiol + NADP(+) = estrone + NADPH + H(+). Its function is as follows. Has dehydrogenase activity against corticosterone (11 beta-hydroxysteroid) and estradiol (17 beta-hydroxysteroid), with similar activities to both sterols in the presence of NADP(+), but negligible activity to either sterol in the presence of NAD(+). May be involved in signal transduction regulated by various sterols. This Sesamum indicum (Oriental sesame) protein is 11-beta-hydroxysteroid dehydrogenase B.